Reading from the N-terminus, the 628-residue chain is Cystathionine gamma-synthase-like enzyme iboG2 (628 aa).

Tyr-313 serves as a coordination point for substrate. Lys-417 carries the N6-(pyridoxal phosphate)lysine modification.

The protein belongs to the trans-sulfuration enzymes family. The cofactor is pyridoxal 5'-phosphate.

The protein operates within secondary metabolite biosynthesis. Cystathionine gamma-synthase-like enzyme; part of the gene cluster that mediates the biosynthesis of the psychoactive metabolites ibotenic acid and muscimol. The first committed step is glutamate hydroxylation by the 2-oxoglutarate-dependent dioxygenase iboH, and the last step is decarboxylation of ibotenic acid to muscimol by the decarboxylase iboD. The order of the intermediate reactions is somewhat ambiguous. IboA likely activates the carboxylic acid at position 5 to introduce an amide bond, and the flavin monooxygenase iboF generates the N-O bond. There are several options for the latter step. One option is that iboF directly hydroxylates the amide nitrogen formed by iboA to produce a hydroxamic acid species. Another option is that iboF hydroxylates an external N-containing compound, whose resulting N-O bond is subsequently introduced into the hydroxyglutamate scaffold. The paralogous PLP-dependent cystathionine gamma-synthase-like enzymes iboG1 and iboG2 are likely involved in substitution of the OH group at position 3 by the O-N moiety. The first cyclic intermediate is most probably tricholomic acid which is likely desaturated to ibotenic acid by the cytochrome P450 monooxygenase iboC. In Amanita muscaria (strain Koide BX008), this protein is Cystathionine gamma-synthase-like enzyme iboG2.